Consider the following 768-residue polypeptide: Cullin-3 (768 aa).

The tract at residues 677–698 (VAAKQGESDPERKETRQKVDDD) is disordered. Residues 682–698 (GESDPERKETRQKVDDD) are compositionally biased toward basic and acidic residues. A Cullin neddylation domain is found at 698 to 760 (DRKHEIEAAI…REYLARTPED (63 aa)). A Glycyl lysine isopeptide (Lys-Gly) (interchain with G-Cter in NEDD8) cross-link involves residue Lys-712.

The protein belongs to the cullin family. As to quaternary structure, component of multiple BCR (BTB-CUL3-RBX1) E3 ubiquitin-protein ligase complexes formed of cul3, rbx1 and a variable BTB domain-containing protein acting as both, adapter to cullin and substrate recognition subunit. Interacts with btbd6. Neddylated. Attachment of NEDD8 is required for the E3 ubiquitin-protein ligase activity of the SCF-like complex.

The protein resides in the nucleus. Its pathway is protein modification; protein ubiquitination. Its function is as follows. Probable core component of cullin-based SCF-like E3 ubiquitin-protein ligase complexes which mediate the ubiquitination and subsequent proteasomal degradation of target proteins. The E3 ubiquitin-protein ligase activity of the complex is dependent on the neddylation of the cullin subunit. Involved in ER-Golgi transport by regulating the size of COPII coats, thereby playing a key role in collagen export, which is required for embryonic stem (ES) cells division. May play a role in the regulation of mittotic entry via ubiquitination of aurka. This is Cullin-3 (cul3) from Xenopus tropicalis (Western clawed frog).